The chain runs to 149 residues: Large ribosomal subunit protein uL15 (149 aa).

Basic and acidic residues predominate over residues 1–28 (MVIKIHDLRPAPGSKRDKIRVGRGEGSK). The disordered stretch occupies residues 1–54 (MVIKIHDLRPAPGSKRDKIRVGRGEGSKGKTAGRGTKGTKARKNVSPRFEGGQM).

The protein belongs to the universal ribosomal protein uL15 family. Part of the 50S ribosomal subunit.

Its function is as follows. Binds to the 23S rRNA. This is Large ribosomal subunit protein uL15 from Saccharopolyspora erythraea (strain ATCC 11635 / DSM 40517 / JCM 4748 / NBRC 13426 / NCIMB 8594 / NRRL 2338).